The following is a 100-amino-acid chain: Large ribosomal subunit protein bL28 (100 aa).

Residues 1–25 are disordered; the sequence is MTRRCDITGKSVLSGNNVSHANNKS. The segment covering 11–22 has biased composition (polar residues); sequence SVLSGNNVSHAN.

It belongs to the bacterial ribosomal protein bL28 family.

In Acidiphilium cryptum (strain JF-5), this protein is Large ribosomal subunit protein bL28.